The chain runs to 1196 residues: Nucleolar protein 6 (1196 aa).

Disordered regions lie at residues 1–74 and 1140–1196; these read MPGK…NVKP and KREQ…KALK. Composition is skewed to basic and acidic residues over residues 22–31 and 65–74; these read HAEDHSDLEH and HRGDTKNVKP. Residues 1165 to 1187 show a composition bias toward basic residues; the sequence is KPKKHGKRKGTGKAAPPKKKRLI.

This sequence belongs to the NRAP family. As to quaternary structure, part of the small subunit (SSU) processome, composed of more than 70 proteins and the RNA chaperone small nucleolar RNA (snoRNA) U3.

It is found in the nucleus. It localises to the nucleolus. The protein localises to the chromosome. Functionally, part of the small subunit (SSU) processome, first precursor of the small eukaryotic ribosomal subunit. During the assembly of the SSU processome in the nucleolus, many ribosome biogenesis factors, an RNA chaperone and ribosomal proteins associate with the nascent pre-rRNA and work in concert to generate RNA folding, modifications, rearrangements and cleavage as well as targeted degradation of pre-ribosomal RNA by the RNA exosome. This chain is Nucleolar protein 6, found in Drosophila simulans (Fruit fly).